We begin with the raw amino-acid sequence, 949 residues long: MKTDAFALRHIGPRETDLQHMLQTIGVDSIEQLVYETLPDDIRLKAPLNLDPAMTEYEFANHIQELGKKNKVFKSYIGLGYHPTIVPAPIQRNIFENPGWYTAYTPYQAEIAQGRLEAILNFQTTVIELTGMEIANASLLDEGTAAAEAMALLFDVRTRDQKKNNTHKFFVSEEILPQTLSVLQTRSTPIGIELVVGNHETFDFSTEFFGAILQYPGKYGQVNDYGAFVAKAKENEIKVAFAADILSLAALTSPGEMGAAVVVGTTQRFGVPMGYGGPHAAYFATKDEYKRSMPGRIIGVSVDANGNRALRMALGTREQHIKREKATSNICTAQVLLAVMAGMYAVYHGPKGLKYIANKVHASAVTTAEALNKLGVFQTNTAFFDTILVKADAQKVKAIAEKNEVNFFYPDAESVSISLNETTSVSDINQIIAIFAEALGKEAVTVSELTTASQLPASLERTSSFLTHDVFNNHHSESQLMRYIKKLERKDLSLNHSMISLGSCTMKLNAASEMLPLSMPNWNSIHPFAPVEQAEGYITMLKKLEQQLNVITGFAGTTLQPNSGAQGEYAGLMAIRAYHLSRNEGHRNVCLIPSSAHGTNPASAAMAGMKIIVTKTTPEGNIDVEDLREKAIEHKDDLSCLMVTYPSTHGVFESSIIEITKLIHENGGLVYMDGANMNAQVGLTNPATIGADVCHLNLHKTFAIPHGGGGPGVGPICVNEKLVPFLPTNPILKVGGEQAITAISSAPYGSALVCLISYGYITMMGAEGLKSATEHAILNANYMKSRFEGHYPILYTGECGRAAHEMILDCRAFKENGIEVGDIAKRLMDYGFHAPTVSFPVAGTLMIEPTESEDLAELDRFCDALISIRKEIEAATADDKNNVLKNAPHTLAMLTSDSWDFPYSREKAAYPLEYIADNKFWPSVRRVDDAYGDRNLVCSCAPIEAYMEN.

At Lys700 the chain carries N6-(pyridoxal phosphate)lysine.

The protein belongs to the GcvP family. The glycine cleavage system is composed of four proteins: P, T, L and H. The cofactor is pyridoxal 5'-phosphate.

It carries out the reaction N(6)-[(R)-lipoyl]-L-lysyl-[glycine-cleavage complex H protein] + glycine + H(+) = N(6)-[(R)-S(8)-aminomethyldihydrolipoyl]-L-lysyl-[glycine-cleavage complex H protein] + CO2. The glycine cleavage system catalyzes the degradation of glycine. The P protein binds the alpha-amino group of glycine through its pyridoxal phosphate cofactor; CO(2) is released and the remaining methylamine moiety is then transferred to the lipoamide cofactor of the H protein. The sequence is that of Glycine dehydrogenase (decarboxylating) from Flavobacterium johnsoniae (strain ATCC 17061 / DSM 2064 / JCM 8514 / BCRC 14874 / CCUG 350202 / NBRC 14942 / NCIMB 11054 / UW101) (Cytophaga johnsonae).